Reading from the N-terminus, the 368-residue chain is Quinolinate synthase (368 aa).

Residues H46 and S63 each coordinate iminosuccinate. C110 provides a ligand contact to [4Fe-4S] cluster. Residues 141–143 (YVN) and S162 each bind iminosuccinate. Residue C230 participates in [4Fe-4S] cluster binding. Iminosuccinate contacts are provided by residues 256-258 (HPE) and T273. Residue C320 coordinates [4Fe-4S] cluster.

Belongs to the quinolinate synthase family. Type 3 subfamily. [4Fe-4S] cluster is required as a cofactor.

The protein localises to the cytoplasm. It carries out the reaction iminosuccinate + dihydroxyacetone phosphate = quinolinate + phosphate + 2 H2O + H(+). Its pathway is cofactor biosynthesis; NAD(+) biosynthesis; quinolinate from iminoaspartate: step 1/1. Its function is as follows. Catalyzes the condensation of iminoaspartate with dihydroxyacetone phosphate to form quinolinate. The protein is Quinolinate synthase of Bacillus cytotoxicus (strain DSM 22905 / CIP 110041 / 391-98 / NVH 391-98).